The following is a 640-amino-acid chain: F-box protein MET30 (640 aa).

Residues methionine 1 to leucine 19 show a composition bias toward basic and acidic residues. Residues methionine 1–glutamine 84 are disordered. Residues methionine 1–lysine 299 are necessary to mediate nuclear localization. Composition is skewed to polar residues over residues threonine 45–serine 56 and alanine 64–arginine 82. Serine 67 carries the phosphoserine modification. An interaction with SKP1/CBF3D region spans residues lysine 180–tyrosine 225. An important for mediating homomultimerization region spans residues lysine 180–isoleucine 277. An F-box domain is found at isoleucine 181 to methionine 227. Residues isoleucine 277–aspartate 640 are interaction with MET4. 8 WD repeats span residues glycine 300 to aspartate 328, glycine 340 to asparagine 368, glycine 380 to histidine 408, glycine 419 to aspartate 449, glycine 461 to aspartate 499, asparagine 509 to aspartate 538, glycine 550 to aspartate 578, and aspartate 607 to lysine 635. The span at alanine 481–proline 495 shows a compositional bias: polar residues. Residues alanine 481–aspartate 516 are disordered.

Belongs to the WD repeat MET30/SCONB/SCON-2 family. Homomultimer. Interacts with CDC53 and SKP1/CBF3D to form the E3 ubiquitin ligase complex SCF(Met30). Interacts with MET4.

It localises to the cytoplasm. The protein localises to the nucleus. It participates in protein modification; protein ubiquitination. Its function is as follows. Substrate-recognition component of the SCF(Met30) complex, an E3 ubiquitin ligase complex that mediates the ubiquitination and subsequent proteasomal degradation of target proteins. Negatively regulates sulfur amino acids biosynthesis genes expression. Controls cell cycle function (being required for the G1/S transition and M-phase but not the S-phase), sulfur metabolism, and methionine biosynthesis as part of the SCF(Met30) complex. Required for the efficient binding of CDC45 and MCM proteins to origins of replication. Required for efficient expression of G1 cyclins. The SCF(Met30) complex catalyzes ubiquitination and degradation of the Cdk-inhibitory kinase SWE1. Involved in the S-adenosylmethionine (AdoMet)-mediated inhibition of the transcription function of MET4. The SCF(Met30) complex mediates ubiquitination and subsequent degradation of MET4 and the cellular response to cadmium. The SCF(Met30) complex acts as an inhibitor of autophagy by promoting ubiquitination and degradation of ATG9 in normal conditions. The chain is F-box protein MET30 from Saccharomyces cerevisiae (strain ATCC 204508 / S288c) (Baker's yeast).